The primary structure comprises 153 residues: Putative ubiquitin-conjugating enzyme E2 N-like (153 aa).

Positions 3 to 150 (ELPHRIIKET…ARAWTRLYAM (148 aa)) constitute a UBC core domain. Residue lysine 83 is modified to N6-acetyllysine.

This sequence belongs to the ubiquitin-conjugating enzyme family. In terms of tissue distribution, expressed in epididymis (at protein level).

The sequence is that of Putative ubiquitin-conjugating enzyme E2 N-like (UBE2NL) from Homo sapiens (Human).